Reading from the N-terminus, the 371-residue chain is 4-hydroxy-3-methylbut-2-en-1-yl diphosphate synthase (flavodoxin) (371 aa).

The [4Fe-4S] cluster site is built by Cys-270, Cys-273, Cys-305, and Glu-312.

The protein belongs to the IspG family. [4Fe-4S] cluster serves as cofactor.

The catalysed reaction is (2E)-4-hydroxy-3-methylbut-2-enyl diphosphate + oxidized [flavodoxin] + H2O + 2 H(+) = 2-C-methyl-D-erythritol 2,4-cyclic diphosphate + reduced [flavodoxin]. It participates in isoprenoid biosynthesis; isopentenyl diphosphate biosynthesis via DXP pathway; isopentenyl diphosphate from 1-deoxy-D-xylulose 5-phosphate: step 5/6. In terms of biological role, converts 2C-methyl-D-erythritol 2,4-cyclodiphosphate (ME-2,4cPP) into 1-hydroxy-2-methyl-2-(E)-butenyl 4-diphosphate. The protein is 4-hydroxy-3-methylbut-2-en-1-yl diphosphate synthase (flavodoxin) of Shewanella piezotolerans (strain WP3 / JCM 13877).